An 88-amino-acid chain; its full sequence is Small ribosomal subunit protein bS20 (88 aa).

A disordered region spans residues methionine 1–methionine 27.

It belongs to the bacterial ribosomal protein bS20 family.

Binds directly to 16S ribosomal RNA. The protein is Small ribosomal subunit protein bS20 of Shewanella sp. (strain ANA-3).